The following is a 396-amino-acid chain: Queuine tRNA-ribosyltransferase catalytic subunit 1 (396 aa).

Residue Asp-99 is the Proton acceptor of the active site. Queuine is bound by residues 99–103 (DSGGF), Asp-153, Gln-196, and Gly-223. The tract at residues 254–260 (GVGYATD) is RNA binding. Residue Asp-273 is the Nucleophile of the active site. The tract at residues 278–282 (TRTAR) is RNA binding; important for wobble base 34 recognition. Zn(2+) is bound by residues Cys-311, Cys-313, Cys-316, and His-341.

Belongs to the queuine tRNA-ribosyltransferase family. Heterodimer of a catalytic subunit qtrt1 and an accessory subunit qtrt2. It depends on Zn(2+) as a cofactor.

It localises to the cytoplasm. Its subcellular location is the mitochondrion outer membrane. It carries out the reaction guanosine(34) in tRNA + queuine = queuosine(34) in tRNA + guanine. In terms of biological role, catalytic subunit of the queuine tRNA-ribosyltransferase (TGT) that catalyzes the base-exchange of a guanine (G) residue with queuine (Q) at position 34 (anticodon wobble position) in tRNAs with GU(N) anticodons (tRNA-Asp, -Asn, -His and -Tyr), resulting in the hypermodified nucleoside queuosine (7-(((4,5-cis-dihydroxy-2-cyclopenten-1-yl)amino)methyl)-7-deazaguanosine). Catalysis occurs through a double-displacement mechanism. The nucleophile active site attacks the C1' of nucleotide 34 to detach the guanine base from the RNA, forming a covalent enzyme-RNA intermediate. The proton acceptor active site deprotonates the incoming queuine, allowing a nucleophilic attack on the C1' of the ribose to form the product. This chain is Queuine tRNA-ribosyltransferase catalytic subunit 1, found in Xenopus laevis (African clawed frog).